Reading from the N-terminus, the 308-residue chain is Protein UL135 (308 aa).

An N-terminal signal peptide occupies residues 1–22; sequence MVWLWLGVGLLGGTGLASLVLA. Residues 105-274 are disordered; that stretch reads KPEFPPARFE…TEPTTLPIVS (170 aa). Residues 126–145 are compositionally biased toward low complexity; that stretch reads SIGRSPSHCSSSSSLSSSAS. Composition is skewed to pro residues over residues 152–163 and 219–238; these read QPPPSWKPPPPP and PVTP…PRNP.

The protein belongs to the HCMV UL135 family. In terms of assembly, interacts with host components of the WAVE2 complex ABI1, NAP1 and WAVE2. Also interacts with host ABI2 and TLN1.

The protein resides in the host cell membrane. It is found in the host Golgi apparatus. Remodels the host actin cytoskeleton in order to impair immune recognition of infected cells. Mechanistically, interacts with members of the host WAVE2 complex and redirects the complex to the plasma membrane. In turn, the efficiency of immune synapse formation is greatly reduced. The sequence is that of Protein UL135 (UL135) from Human cytomegalovirus (strain Merlin) (HHV-5).